Here is a 472-residue protein sequence, read N- to C-terminus: Methanethiol oxidase (472 aa).

Position 2 is an N-acetylalanine (alanine 2). 2 positions are modified to phosphoserine: serine 111 and serine 467.

Belongs to the selenium-binding protein family. In terms of assembly, interacts with USP33. The N-terminus is blocked. As to expression, highly expressed in liver, kidney and, to a lesser extent, lung.

Its subcellular location is the nucleus. It localises to the cytoplasm. It is found in the cytosol. The protein localises to the membrane. It carries out the reaction methanethiol + O2 + H2O = hydrogen sulfide + formaldehyde + H2O2 + H(+). The protein operates within organosulfur degradation. Its function is as follows. Catalyzes the oxidation of methanethiol, an organosulfur compound known to be produced in substantial amounts by gut bacteria. Selenium-binding protein which may be involved in the sensing of reactive xenobiotics in the cytoplasm. May be involved in intra-Golgi protein transport. The protein is Methanethiol oxidase (Selenbp1) of Mus musculus (Mouse).